A 659-amino-acid chain; its full sequence is Probable acyl-coenzyme A oxidase acox-1.5 (659 aa).

FAD-binding positions include 148-151 (YAQT), 156-157 (GT), and Gly-190. Residues 284–287 (KVGY) and Arg-294 contribute to the substrate site. FAD-binding positions include Arg-319 and 339–342 (QQYR). Positions 395 and 403 each coordinate ATP. Residue Gly-410 participates in FAD binding. 432 to 433 (YE) lines the substrate pocket. Residue Glu-433 is the Proton acceptor of the active site. Glu-435 contributes to the FAD binding site. ATP is bound at residue 524-527 (KAAR). The Microbody targeting signal motif lies at 657–659 (SKL).

This sequence belongs to the acyl-CoA oxidase family. In terms of assembly, homodimer. FAD is required as a cofactor.

It localises to the peroxisome. The protein operates within lipid metabolism; peroxisomal fatty acid beta-oxidation. Activated by ATP. ATP binding leads to a conformational change that promotes FAD cofactor binding and enzyme activity. ATP binding likely occurs during acox-1.5 folding and/or dimer formation. Functionally, involved in the first step of peroxisomal beta-oxidation by catalyzing the desaturation of fatty acid-derived side chains. This Caenorhabditis elegans protein is Probable acyl-coenzyme A oxidase acox-1.5.